The following is a 148-amino-acid chain: UPF0756 membrane protein YeaL (148 aa).

The next 4 helical transmembrane spans lie at alanine 14–valine 34, leucine 51–leucine 71, phenylalanine 80–glycine 100, and valine 121–valine 141.

It belongs to the UPF0756 family.

The protein localises to the cell membrane. In Escherichia fergusonii (strain ATCC 35469 / DSM 13698 / CCUG 18766 / IAM 14443 / JCM 21226 / LMG 7866 / NBRC 102419 / NCTC 12128 / CDC 0568-73), this protein is UPF0756 membrane protein YeaL.